Reading from the N-terminus, the 298-residue chain is MPSKYLFTVIIPTYNCCQYIKKALDSLLLQNEYFLKTQVLIVNDGSLDNTKEVVSDYLIKYSNISYFEKTNGNWGSVINYVKKNKLALGQYITVLDSDDYFLKDSFKKVARFFGHDMIIGAFYCYINENKTRFLKPYFGKTGVIKEHTKLRTPHSQPIAKFYSNKLFYELHDLKEKLFFQDCLMYHDAINRVESVFYLREPLAVWFSTRPGNSTTTSWENPNKFNAWCEILQKMNLYGAGIVIYIYTMLPGFLKQLKKKQLILNLNHKPAYTWLPKPLAFIFGGLMAFKTRKYIKYPK.

Belongs to the glycosyltransferase 2 family.

This is an uncharacterized protein from Mycoplasma genitalium (strain ATCC 33530 / DSM 19775 / NCTC 10195 / G37) (Mycoplasmoides genitalium).